The sequence spans 558 residues: MRAQPDLKPRSRDVTDGLERAAARGMLRAVGMTDADWEKPQIGVASSWNEITPCNLSLDRLAQAAKEGVHAAGGYPLEFATISVSDGISMGHEGMHFSLISREVIADSVETVFMAERFDGAVLLAGCDKSEPGMLMAAARLDLAAVFLYAGSTLPGKLGDRDINIVDAFEAVGGCLRGLVSREEVDAIERNFCPVEGACAGMFTANTMASAAEALGMSLPGSASPPAPDRRRDGFARASGEAVVNLLRRGITARDIMTREAFENAIAVVMALGGSTNAVLHLLAIAREANVDLAIDDFNRIGDRVPHLADVKPFGRYVMSDVDRVGGVPVVMKALLDAGLLHGDCLTVTGKTVAENLADITPPDPDGKVIHALTQPIHRTGGLAILRGSLAPDGAVVKTAGLESTFFEGTARVFDGEEAAMRAVPELRPGDVVVIRYEGPKGGPGMREMLAVTGAIKGAGLGKDVLLVTDGRFSGGTTGFCVAHVAPEAVDGGPIAFVRDGDRIRLDAQARTLDLLVDADELAKRRADWQPPPPRYTTGVAAKYVKLVGSASEGAICR.

Cys-54 serves as a coordination point for [2Fe-2S] cluster. Mg(2+) is bound at residue Asp-86. A [2Fe-2S] cluster-binding site is contributed by Cys-127. Residues Asp-128 and Lys-129 each contribute to the Mg(2+) site. Lys-129 is modified (N6-carboxylysine). Cys-199 serves as a coordination point for [2Fe-2S] cluster. A Mg(2+)-binding site is contributed by Glu-448. Ser-474 (proton acceptor) is an active-site residue.

The protein belongs to the IlvD/Edd family. Homodimer. [2Fe-2S] cluster serves as cofactor. Mg(2+) is required as a cofactor.

It carries out the reaction (2R)-2,3-dihydroxy-3-methylbutanoate = 3-methyl-2-oxobutanoate + H2O. It catalyses the reaction (2R,3R)-2,3-dihydroxy-3-methylpentanoate = (S)-3-methyl-2-oxopentanoate + H2O. Its pathway is amino-acid biosynthesis; L-isoleucine biosynthesis; L-isoleucine from 2-oxobutanoate: step 3/4. It functions in the pathway amino-acid biosynthesis; L-valine biosynthesis; L-valine from pyruvate: step 3/4. Its function is as follows. Functions in the biosynthesis of branched-chain amino acids. Catalyzes the dehydration of (2R,3R)-2,3-dihydroxy-3-methylpentanoate (2,3-dihydroxy-3-methylvalerate) into 2-oxo-3-methylpentanoate (2-oxo-3-methylvalerate) and of (2R)-2,3-dihydroxy-3-methylbutanoate (2,3-dihydroxyisovalerate) into 2-oxo-3-methylbutanoate (2-oxoisovalerate), the penultimate precursor to L-isoleucine and L-valine, respectively. The sequence is that of Dihydroxy-acid dehydratase from Acidothermus cellulolyticus (strain ATCC 43068 / DSM 8971 / 11B).